We begin with the raw amino-acid sequence, 595 residues long: Tripeptidyl-peptidase SED3 (595 aa).

Positions 1-22 (MLLPWQQTIIILFLGVNSLVAA) are cleaved as a signal peptide. The propeptide at 23–201 (LRNTYRTVEE…KLETIQLSSN (179 aa)) is removed in mature form. Residues Asn-207, Asn-264, and Asn-278 are each glycosylated (N-linked (GlcNAc...) asparagine). In terms of domain architecture, Peptidase S53 spans 209 to 595 (TITPQCLRDI…EILAKIVRDL (387 aa)). Catalysis depends on charge relay system residues Glu-285 and Asp-289. N-linked (GlcNAc...) asparagine glycans are attached at residues Asn-298 and Asn-365. Ser-499 acts as the Charge relay system in catalysis. Residues Asp-541 and Ile-542 each contribute to the Ca(2+) site. N-linked (GlcNAc...) asparagine glycans are attached at residues Asn-554, Asn-557, and Asn-569. Ca(2+) is bound by residues Gly-573 and Asp-575.

The cofactor is Ca(2+).

It is found in the secreted. The protein resides in the extracellular space. It carries out the reaction Release of an N-terminal tripeptide from a polypeptide.. Its function is as follows. Secreted tripeptidyl-peptidase which degrades proteins at acidic pHs and is involved in virulence. The protein is Tripeptidyl-peptidase SED3 (SED3) of Arthroderma otae (strain ATCC MYA-4605 / CBS 113480) (Microsporum canis).